We begin with the raw amino-acid sequence, 341 residues long: Methionine import ATP-binding protein MetN 3 (341 aa).

The ABC transporter domain maps to 2 to 241 (ILLENVKKIY…PQQDITKRFV (240 aa)). ATP is bound at residue 38-45 (GYSGAGKS).

It belongs to the ABC transporter superfamily. Methionine importer (TC 3.A.1.24) family. The complex is composed of two ATP-binding proteins (MetN), two transmembrane proteins (MetI) and a solute-binding protein (MetQ).

The protein resides in the cell membrane. The catalysed reaction is L-methionine(out) + ATP + H2O = L-methionine(in) + ADP + phosphate + H(+). The enzyme catalyses D-methionine(out) + ATP + H2O = D-methionine(in) + ADP + phosphate + H(+). In terms of biological role, part of the ABC transporter complex MetNIQ involved in methionine import. Responsible for energy coupling to the transport system. This Bacillus anthracis protein is Methionine import ATP-binding protein MetN 3.